A 1159-amino-acid polypeptide reads, in one-letter code: MSLPQPTPRMAELRKPTSSLTPPEDPDSQPPSSKRLCLEEPGGVFKAGWRLPLVPRLSEAEKVWELSPRPFKGLLVSTNAIFDNSTDSCVEKSVSGKQICNLKCSNLKFQMSSCLQSPPSQSPDSDLRASGRSEAGLHDREAFSVHRSNSSKAGVSQLLPSTSIHDIHGIRNENRKQQFVQGRDNVHKENPFLDVTFYKETKSPFHEIKNRCKANSVVPSNKRENNISSSVLKISKSQNQPSLEIAKPSYFRDSGTISVPQFPMDLNSKMSSVYLKEIAKKKNDKKEAYVRDFTNIYWSQNRPDVKKQKLQNDKKTVEAENIFSKCYENDYPSLSSQNTCKRKDLISSNYCNCSSIQCNVRDSRKNFAILENANWEEAECLDSYVLTRLEKSQNWDCNVRHILRRNRGNCWIINNCKTKCENMKKTEEKWNWLLLLEIDLLSKEDYHCAKVINAYEEQSKLLVREILGSQTALITTVWLNGKGENDNTLQLRYNTTQKVFHVNNPFESFIIEIFYFHKSISGNKKDNSILTCCNILKCKKQIGIIGIQNLITRNMNTNIKNGILSIYLQDSVSEPLDILLKTNIAFLLNNFDSLTRIENDFELEEECIFKCMLYLKYPKNIVENHTAYLVKILTSSRLLEDNMKPMLKKRKLFRTEQVFEKSKKKLINSFSMTTQNTGFPIFETYEKIPLLMDFDDMDEISLIREITCQNMSCPQQVVNVENWAHYNSSTVKAHGNSCPQFIQNNRGYINENFYEVNMHSQDLNMERKQGHNKISNFDCEHIFEDLCNVRQQAIPASHNIIHNEETHTTSITQVLNFWNLLSEIEEKKYDLILKEEVKVTAESLTNSCQVHKDTKIEKEEKDSFFPMDDMFSVQSVSLISKEVNVEENKYVNQNYVTNTNEYESILPEREIANSKDFHRKNDSALYINHQFETGLSEGNDECFQDLAAKYLSTEALTIVKDFEMKRKFDLVLEELRMFHEISRENELLSTVETNNGQENYFGENDAEKVKMEIEKDLKMVVVNKIRASSSFHDTIAGPNMGKSHQSLFKWKTVPNNGEQEVPNESCYPSRSEEELLYSTSEKDCETPLPKRPAFLPDECKEEFNYLLRGGSHFPHGISRVRPLKTCSRPIRIGLSRKARIKQLHPYLKQMCYGNLKENF.

The disordered stretch occupies residues 1–35; it reads MSLPQPTPRMAELRKPTSSLTPPEDPDSQPPSSKR. The tract at residues 1111-1159 is interaction with RAD51; that stretch reads SHFPHGISRVRPLKTCSRPIRIGLSRKARIKQLHPYLKQMCYGNLKENF.

As to quaternary structure, interacts with RAD51. In terms of tissue distribution, specifically expressed in meiotic tissues. Highly expressed in testis.

The polypeptide is RAD51-associated protein 2 (RAD51AP2) (Homo sapiens (Human)).